A 172-amino-acid polypeptide reads, in one-letter code: 3-hydroxydecanoyl-[acyl-carrier-protein] dehydratase (172 aa).

His71 is a catalytic residue.

It belongs to the thioester dehydratase family. FabA subfamily. Homodimer.

It is found in the cytoplasm. It carries out the reaction a (3R)-hydroxyacyl-[ACP] = a (2E)-enoyl-[ACP] + H2O. The enzyme catalyses (3R)-hydroxydecanoyl-[ACP] = (2E)-decenoyl-[ACP] + H2O. It catalyses the reaction (2E)-decenoyl-[ACP] = (3Z)-decenoyl-[ACP]. It participates in lipid metabolism; fatty acid biosynthesis. In terms of biological role, necessary for the introduction of cis unsaturation into fatty acids. Catalyzes the dehydration of (3R)-3-hydroxydecanoyl-ACP to E-(2)-decenoyl-ACP and then its isomerization to Z-(3)-decenoyl-ACP. Can catalyze the dehydratase reaction for beta-hydroxyacyl-ACPs with saturated chain lengths up to 16:0, being most active on intermediate chain length. The protein is 3-hydroxydecanoyl-[acyl-carrier-protein] dehydratase of Enterobacter sp. (strain 638).